The primary structure comprises 698 residues: Inner centromere protein SLI15 (698 aa).

A Phosphoserine modification is found at S268. 3 disordered regions span residues K365–T390, E405–N444, and R455–T474. Composition is skewed to polar residues over residues R422–S439 and A459–T474. S489 bears the Phosphoserine mark. Positions I535–L560 are disordered. A compositionally biased stretch (basic and acidic residues) spans Q550–L560.

This sequence belongs to the INCENP family. In terms of assembly, component of the CPC complex at least composed of IPL1, BIR1 and SLI15. In terms of processing, phosphorylated by serine/threonine protein kinase IPL1.

It localises to the nucleus. It is found in the cytoplasm. The protein resides in the cytoskeleton. Its subcellular location is the spindle. The protein localises to the chromosome. It localises to the centromere. It is found in the kinetochore. In terms of biological role, component of the chromosomal passenger complex (CPC), a complex that acts as a key regulator of mitosis. Stimulates IPL1 kinase activity and facilitates its association with the mitotic spindle. Has a role in attaching the kinetochores to the microtubules and ensuring that sister kinetochores connect to opposite poles. This Saccharomyces cerevisiae (strain ATCC 204508 / S288c) (Baker's yeast) protein is Inner centromere protein SLI15 (SLI15).